We begin with the raw amino-acid sequence, 131 residues long: Glycine cleavage system H protein (131 aa).

The region spanning 24-106 (TVRVGITDYA…YGEGWLVELQ (83 aa)) is the Lipoyl-binding domain. Lys65 carries the N6-lipoyllysine modification.

Belongs to the GcvH family. The glycine cleavage system is composed of four proteins: P, T, L and H. (R)-lipoate is required as a cofactor.

The glycine cleavage system catalyzes the degradation of glycine. The H protein shuttles the methylamine group of glycine from the P protein to the T protein. This is Glycine cleavage system H protein from Mycolicibacterium vanbaalenii (strain DSM 7251 / JCM 13017 / BCRC 16820 / KCTC 9966 / NRRL B-24157 / PYR-1) (Mycobacterium vanbaalenii).